A 183-amino-acid chain; its full sequence is Inner membrane protein YgjV (183 aa).

Over 1-2 (MT) the chain is Periplasmic. A helical transmembrane segment spans residues 3–23 (AYWLAQGVGVIAFLIGITTFF). Residues 24-38 (NRDERRFKKQLSVYS) lie on the Cytoplasmic side of the membrane. The helical transmembrane segment at 39-59 (AVIGVHFFLLGTYPAGASAIL) threads the bilayer. The Periplasmic portion of the chain corresponds to 60–71 (NAIRTLITLRTR). 2 helical membrane-spanning segments follow: residues 72–92 (SLWV…AKFH) and 93–113 (HPVE…LFCC). At 114–133 (KGLTMRCVMWFSTCCWVIHN) the chain is on the periplasmic side. A helical membrane pass occupies residues 134 to 154 (FWAGSIGGTMIEGSFLLMNGL). At 155 to 183 (NIIRFWRMQKRGIDPFKVEKTPSAVDERG) the chain is on the cytoplasmic side.

It is found in the cell inner membrane. This chain is Inner membrane protein YgjV (ygjV), found in Escherichia coli (strain K12).